Consider the following 473-residue polypeptide: MAVSRATLFDKVWDLHTVGTLASGQTQLFIGLHLIHEVTSPQAFAMLRERGLGVLYAERTVATVDHIVPTQSQQRPFADTLAEQMIRALEDNCAEFGIRFYNIGSGSQGIVHVIAPEQGFTQPGMTIACGDSHTATHGAFGAIAFGIGTSQVRDVLATQTLALDKLKVRRIEMNGSLHPGVFAKDVILHIIRKLGVKAGVGYAYEFAGTTFEAMNMEERMTVCNMAIEGGARCGYINPDAVTYAYLKGRDFAPQGADWERAVAWWENLRSDPDAQYDDTIHFDAAEIAPTVTWGITPGQGIAVDEIVPRPEELPGEDRPLAEEAYRYMDLAPGVPIVGTKVDVCFIGSCTNGRLSDLREAANLARGRHVAPGVKAFVVPGSERVKRQAEAEGLHEVFLEAGFEWREPGCSMCLAMNPDRLEGRQLSASSSNRNFKGRQGSASGRTLLMSPAMVVAAAVSGAVADVRALLEPTP.

Residues C349, C409, and C412 each coordinate [4Fe-4S] cluster.

This sequence belongs to the aconitase/IPM isomerase family. LeuC type 1 subfamily. As to quaternary structure, heterodimer of LeuC and LeuD. [4Fe-4S] cluster is required as a cofactor.

It carries out the reaction (2R,3S)-3-isopropylmalate = (2S)-2-isopropylmalate. The protein operates within amino-acid biosynthesis; L-leucine biosynthesis; L-leucine from 3-methyl-2-oxobutanoate: step 2/4. Functionally, catalyzes the isomerization between 2-isopropylmalate and 3-isopropylmalate, via the formation of 2-isopropylmaleate. In Gloeobacter violaceus (strain ATCC 29082 / PCC 7421), this protein is 3-isopropylmalate dehydratase large subunit.